Consider the following 252-residue polypeptide: Large ribosomal subunit protein uL10m (252 aa).

The N-terminal 24 residues, 1-24, are a transit peptide targeting the mitochondrion; the sequence is MAATLCCRLLPKAGWVPLTQSVRH.

Belongs to the universal ribosomal protein uL10 family. As to quaternary structure, component of the mitochondrial ribosome large subunit (39S) which comprises a 16S rRNA and about 50 distinct proteins.

It localises to the mitochondrion. This chain is Large ribosomal subunit protein uL10m (mrpl10), found in Danio rerio (Zebrafish).